A 499-amino-acid chain; its full sequence is Probable inactive receptor-like protein kinase At3g56050 (499 aa).

The signal sequence occupies residues Met-1 to Ser-31. The N-linked (GlcNAc...) asparagine glycan is linked to Asn-14. The Extracellular portion of the chain corresponds to Leu-32–Pro-146. A disordered region spans residues Arg-80–Pro-121. N-linked (GlcNAc...) asparagine glycosylation is present at Asn-142. The helical transmembrane segment at Ile-147 to Phe-167 threads the bilayer. The Cytoplasmic portion of the chain corresponds to Phe-168–Ala-499. Positions Glu-208 to Thr-474 constitute a Protein kinase domain.

The protein resides in the cell membrane. This is Probable inactive receptor-like protein kinase At3g56050 from Arabidopsis thaliana (Mouse-ear cress).